A 149-amino-acid chain; its full sequence is Probable flagellum biosynthesis repressor protein FlbT (149 aa).

The protein belongs to the FlbT family.

In terms of biological role, has a post-transcriptional repressor function in flagellum biogenesis. Associates with the 5'-UTR of fljK mRNA and promotes its degradation. In Rhizobium etli (strain CIAT 652), this protein is Probable flagellum biosynthesis repressor protein FlbT.